Here is a 121-residue protein sequence, read N- to C-terminus: ATP synthase epsilon chain (121 aa).

It belongs to the ATPase epsilon chain family. F-type ATPases have 2 components, CF(1) - the catalytic core - and CF(0) - the membrane proton channel. CF(1) has five subunits: alpha(3), beta(3), gamma(1), delta(1), epsilon(1). CF(0) has three main subunits: a, b and c.

The protein resides in the cell membrane. In terms of biological role, produces ATP from ADP in the presence of a proton gradient across the membrane. In Mycobacterium avium (strain 104), this protein is ATP synthase epsilon chain.